The sequence spans 455 residues: Golgi pH regulator A (455 aa).

The next 5 helical transmembrane spans lie at 5–25 (IDSSIMITSQILFFGFGWLFF), 46–66 (VTFAFSCTMFELIIFEILGVL), 79–99 (LCVILLILVFMVPFYIGYFIV), 114–134 (CLLWLTFMYFFWKLGDPFPIL), and 150–170 (VGVIGVTLMALLSGFGAVNCP). Residues N180 and N243 are each glycosylated (N-linked (GlcNAc...) asparagine). Helical transmembrane passes span 290–310 (GYFFSIYCVWKIFMATINIVF), 343–363 (ISFILVGIIIVTSIRGLLITL), 378–398 (VIVLLLAQIMGMYFVSSVLLI), and 425–445 (WFDVIFLVSALSSILFLYLAH).

It belongs to the Golgi pH regulator (TC 1.A.38) family. Homotrimer. Interacts with RABL3; the interaction stabilizes GPR89A. In terms of tissue distribution, ubiquitous.

Its subcellular location is the golgi apparatus membrane. It catalyses the reaction iodide(out) = iodide(in). It carries out the reaction chloride(in) = chloride(out). The enzyme catalyses bromide(in) = bromide(out). The catalysed reaction is fluoride(in) = fluoride(out). Voltage-gated channel that enables the transfer of monoatomic anions such as iodide, chloride, bromide and fluoride which may function in counter-ion conductance and participates in Golgi acidification. Plays a role in lymphocyte development, probably by acting as a RABL3 effector in hematopoietic cells. In Homo sapiens (Human), this protein is Golgi pH regulator A.